Consider the following 260-residue polypeptide: MDRKRKLICDAFKVKKLRGSCSRDETDLKTSTSPYPDFTEDPHGAVSYLCALFPRKLFNDTLPPLFLKHQLYSLMQDRTVVDRLLSSLQQKGEVCLVQTGFDLDTFMVVMTDDLRRTALSSSEGDSRATVVRKFLDCDLLLSPNISYGRDEMMMKHRFSDGEITQLVRAGLLTVRDAGSWWLAVPGAGRFITHFIKGRKALLSQIRRSRYKEVLLTDLSTRKAPPNLRLGMEFHIHDIIGAGLVDCVPTASGILLRISET.

3 winged helix domain regions span residues 38 to 110, 126 to 185, and 186 to 260; these read FTED…MVVM, SRAT…LAVP, and GAGR…ISET.

The protein belongs to the STK19 family. In terms of assembly, monomer in solution. Homodimer; when bound to DNA. Component of a transcription-coupled nucleotide excision repair (TC-NER) complex which assembles and interacts with the multiprotein RNA polymerase II complex when it stalls at DNA lesions.

Its subcellular location is the nucleus. In terms of biological role, DNA-binding protein which is required for efficient transcription-coupled nucleotide excision repair (TC-NER). Acts as part of a TC-NER complex which assembles and interacts with RNA polymerase II (RNAPII) when it stalls at DNA lesions. The sequence is that of Winged helix repair factor 1 from Xenopus laevis (African clawed frog).